The primary structure comprises 20 residues: Collagenolytic protease 28 kDa (20 aa).

The Peptidase S1 domain occupies I1–F20.

This sequence belongs to the peptidase S1 family.

The enzyme catalyses Hydrolysis of proteins, with broad specificity for peptide bonds. Native collagen is cleaved about 75% of the length of the molecule from the N-terminus. Low activity on small molecule substrates of both trypsin and chymotrypsin.. In terms of biological role, this enzyme is a serine protease capable of degrading the native triple helix of collagen. The protein is Collagenolytic protease 28 kDa of Paralithodes camtschaticus (Red king crab).